A 418-amino-acid chain; its full sequence is Tyrosine--tRNA ligase (418 aa).

An L-tyrosine-binding site is contributed by tyrosine 34. The short motif at 39–48 (PTADSLHLGH) is the 'HIGH' region element. Positions 169 and 173 each coordinate L-tyrosine. Positions 229-233 (KFGKS) match the 'KMSKS' region motif. An ATP-binding site is contributed by lysine 232. The 67-residue stretch at 352-418 (LNIVDMLVTA…GKKKYAVLTY (67 aa)) folds into the S4 RNA-binding domain.

The protein belongs to the class-I aminoacyl-tRNA synthetase family. TyrS type 1 subfamily. In terms of assembly, homodimer.

It is found in the cytoplasm. It catalyses the reaction tRNA(Tyr) + L-tyrosine + ATP = L-tyrosyl-tRNA(Tyr) + AMP + diphosphate + H(+). Catalyzes the attachment of tyrosine to tRNA(Tyr) in a two-step reaction: tyrosine is first activated by ATP to form Tyr-AMP and then transferred to the acceptor end of tRNA(Tyr). This chain is Tyrosine--tRNA ligase, found in Streptococcus equi subsp. equi (strain 4047).